A 236-amino-acid polypeptide reads, in one-letter code: Urease accessory protein UreF (236 aa).

It belongs to the UreF family. As to quaternary structure, ureD, UreF and UreG form a complex that acts as a GTP-hydrolysis-dependent molecular chaperone, activating the urease apoprotein by helping to assemble the nickel containing metallocenter of UreC. The UreE protein probably delivers the nickel.

It is found in the cytoplasm. In terms of biological role, required for maturation of urease via the functional incorporation of the urease nickel metallocenter. This chain is Urease accessory protein UreF, found in Synechocystis sp. (strain ATCC 27184 / PCC 6803 / Kazusa).